We begin with the raw amino-acid sequence, 59 residues long: Large ribosomal subunit protein bL32 (59 aa).

It belongs to the bacterial ribosomal protein bL32 family.

The protein is Large ribosomal subunit protein bL32 of Rhizorhabdus wittichii (strain DSM 6014 / CCUG 31198 / JCM 15750 / NBRC 105917 / EY 4224 / RW1) (Sphingomonas wittichii).